A 689-amino-acid polypeptide reads, in one-letter code: Protein SDA1 homolog (689 aa).

Disordered stretches follow at residues 227–260 (DEKK…TKNK), 485–512 (EQEK…DGEW), and 623–689 (TDRK…RLMK). Positions 258-319 (KNKKKLDKAM…RFEVKLMHMD (62 aa)) form a coiled coil. Acidic residues predominate over residues 492 to 512 (PEEDDGWESASLSDDDEDGEW). The segment covering 670–681 (RDKQIALRDSLL) has biased composition (basic and acidic residues).

It belongs to the SDA1 family.

Its subcellular location is the nucleus. It is found in the nucleolus. Its function is as follows. Required for 60S pre-ribosomal subunits export to the cytoplasm. This Xenopus laevis (African clawed frog) protein is Protein SDA1 homolog (sdad1).